The following is a 62-amino-acid chain: Chromatin protein Cren7 1 (62 aa).

It belongs to the Cren7 family. Monomer. Post-translationally, methylated at multiple sites, to varying extents.

The protein localises to the chromosome. The protein resides in the cytoplasm. In terms of biological role, a chromatin protein, binds double-stranded DNA without sequence specificity. Constrains negative DNA supercoils. This is Chromatin protein Cren7 1 (cren7-1) from Hyperthermus butylicus (strain DSM 5456 / JCM 9403 / PLM1-5).